The sequence spans 267 residues: Acetylglutamate kinase (267 aa).

Substrate is bound by residues G53 to G54, R75, and N167.

It belongs to the acetylglutamate kinase family. ArgB subfamily.

It is found in the cytoplasm. It carries out the reaction N-acetyl-L-glutamate + ATP = N-acetyl-L-glutamyl 5-phosphate + ADP. It participates in amino-acid biosynthesis; L-arginine biosynthesis; N(2)-acetyl-L-ornithine from L-glutamate: step 2/4. Functionally, catalyzes the ATP-dependent phosphorylation of N-acetyl-L-glutamate. The polypeptide is Acetylglutamate kinase (Shewanella pealeana (strain ATCC 700345 / ANG-SQ1)).